Consider the following 264-residue polypeptide: MAALRMGKLTTMPTGLIYASISVHVAKEEESKKQLVKPEQLPIYTAPPLQSKYVEEQPGHLQMGFASIRTTTSRYIGWCKGVYVFVKNGIMDTVQFGKDAYVYLKNPPRDFLPKIGVITVSGLAGFISARKGSRFKRIAYPLGLATLGATVCYPVQSVIIAKVAGKKAYATSQQMYEAVKSLWTKNNKKLPEHKEKTKLGSADETETPAETTHNLKHSVPLPAELSSETKTKSTSGATQFMPDPKLMDHGQSHPEDIDMYSTRS.

A mitochondrion-targeting transit peptide spans 1–27; that stretch reads MAALRMGKLTTMPTGLIYASISVHVAK. Residues 28–110 lie on the Mitochondrial intermembrane side of the membrane; the sequence is EEESKKQLVK…YVYLKNPPRD (83 aa). The helical transmembrane segment at 111 to 129 threads the bilayer; it reads FLPKIGVITVSGLAGFISA. The Mitochondrial matrix portion of the chain corresponds to 130–137; that stretch reads RKGSRFKR. A helical transmembrane segment spans residues 138 to 155; the sequence is IAYPLGLATLGATVCYPV. Over 156-264 the chain is Mitochondrial intermembrane; the sequence is QSVIIAKVAG…EDIDMYSTRS (109 aa). Over residues 189–198 the composition is skewed to basic and acidic residues; the sequence is KLPEHKEKTK. The tract at residues 189–264 is disordered; sequence KLPEHKEKTK…EDIDMYSTRS (76 aa). Over residues 223–238 the composition is skewed to low complexity; that stretch reads AELSSETKTKSTSGAT. A compositionally biased stretch (basic and acidic residues) spans 245-256; it reads KLMDHGQSHPED.

Belongs to the apolipoprotein O/MICOS complex subunit Mic27 family. As to quaternary structure, component of the mitochondrial contact site and cristae organizing system (MICOS) complex, composed of at least MICOS10/MIC10, CHCHD3/MIC19, CHCHD6/MIC25, APOOL/MIC27, IMMT/MIC60, APOO/MIC23/MIC26 and QIL1/MIC13. This complex was also known under the names MINOS or MitOS complex. The MICOS complex associates with mitochondrial outer membrane proteins SAMM50, MTX1 and MTX2 (together described as components of the mitochondrial outer membrane sorting assembly machinery (SAM) complex) and DNAJC11, mitochondrial inner membrane protein TMEM11 and with HSPA9. The MICOS and SAM complexes together with DNAJC11 are part of a large protein complex spanning both membranes termed the mitochondrial intermembrane space bridging (MIB) complex. Interacts with MICOS10/MIC10, IMMT/MIC60 and APOO/MIC23/MIC26.

It localises to the mitochondrion inner membrane. The protein resides in the mitochondrion. Component of the MICOS complex, a large protein complex of the mitochondrial inner membrane that plays crucial roles in the maintenance of crista junctions, inner membrane architecture, and formation of contact sites to the outer membrane. Specifically binds to cardiolipin (in vitro) but not to the precursor lipid phosphatidylglycerol. Plays a crucial role in crista junction formation and mitochondrial function. The sequence is that of MICOS complex subunit MIC27 (APOL) from Bos taurus (Bovine).